Here is a 701-residue protein sequence, read N- to C-terminus: Methionine--tRNA ligase (701 aa).

A 'HIGH' region motif is present at residues 13 to 23 (PYANGSIHLGH). Residues Cys144, Cys147, Cys157, and Cys160 each contribute to the Zn(2+) site. The 'KMSKS' region signature appears at 336–340 (KMSKS). ATP is bound at residue Lys339. The 102-residue stretch at 600–701 (DFSKIDLRIA…SGAQPGMRVK (102 aa)) folds into the tRNA-binding domain.

This sequence belongs to the class-I aminoacyl-tRNA synthetase family. MetG type 1 subfamily. In terms of assembly, homodimer. The cofactor is Zn(2+).

Its subcellular location is the cytoplasm. The catalysed reaction is tRNA(Met) + L-methionine + ATP = L-methionyl-tRNA(Met) + AMP + diphosphate. In terms of biological role, is required not only for elongation of protein synthesis but also for the initiation of all mRNA translation through initiator tRNA(fMet) aminoacylation. This is Methionine--tRNA ligase from Nitrosomonas eutropha (strain DSM 101675 / C91 / Nm57).